We begin with the raw amino-acid sequence, 718 residues long: Polyribonucleotide nucleotidyltransferase (718 aa).

The Mg(2+) site is built by aspartate 496 and aspartate 502. One can recognise a KH domain in the interval 563 to 622; sequence PRLLTIKIDPDMIGLVIGPGGKTIKGITEETGAKIDIEDDGTVTISAVDENKAKRARNIV. The region spanning 632–700 is the S1 motif domain; that stretch reads GDVYAGRVTR…NKGRINLTRL (69 aa).

Belongs to the polyribonucleotide nucleotidyltransferase family. It depends on Mg(2+) as a cofactor.

The protein localises to the cytoplasm. The catalysed reaction is RNA(n+1) + phosphate = RNA(n) + a ribonucleoside 5'-diphosphate. Involved in mRNA degradation. Catalyzes the phosphorolysis of single-stranded polyribonucleotides processively in the 3'- to 5'-direction. The polypeptide is Polyribonucleotide nucleotidyltransferase (Trichormus variabilis (strain ATCC 29413 / PCC 7937) (Anabaena variabilis)).